An 84-amino-acid chain; its full sequence is uncharacterized protein (84 aa).

This is an uncharacterized protein from Saccharomyces cerevisiae (strain ATCC 204508 / S288c) (Baker's yeast).